The sequence spans 988 residues: RecQ-like DNA helicase blm-1 (988 aa).

A disordered region spans residues 46 to 119 (CEEREEEYID…QFPSRPQKRL (74 aa)). 2 tandem repeats follow at residues 121–129 (DPPIVDLDE) and 130–138 (EPPIVDLDD). Residues 121–138 (DPPIVDLDEEPPIVDLDD) are 2 X 9 AA tandem repeats of [DE]-P-P-I-V-D-L-D-[ED]. The tract at residues 148–185 (TSEEVVSGDIAPEEEEEEGHDSFDDFESVPAQPPSKNT) is disordered. Positions 158–174 (APEEEEEEGHDSFDDFE) are enriched in acidic residues. ATP-binding positions include 248 to 252 (FRHRQ) and 272 to 276 (GAGKS). A Helicase ATP-binding domain is found at 256–433 (ILSTLMGHDT…RDHLKMQNSK (178 aa)). A DEAH box motif is present at residues 375–378 (DEAH). Residues 458-603 (NVVEKMKQLY…VRSMHLNNVL (146 aa)) form the Helicase C-terminal domain. The tract at residues 478 to 480 (SRK) is 3' overhang DNA-binding. Position 562 (Arg-562) interacts with ATP. The 3' overhang DNA-binding stretch occupies residues 580–583 (RLRR). Positions 615, 633, 640, and 643 each coordinate Zn(2+). 3' overhang DNA-binding stretches follow at residues 676–678 (TLK), 687–691 (ALIKK), and 736–742 (YSVPNQA). One can recognise an HRDC domain in the interval 807-888 (GDVFTRCLQD…ATYWKQVDER (82 aa)). The tract at residues 930 to 988 (GGGGCRGRGKKRAFSGFSSGRATKKPRATAPSARGKTSGRGGAKPATSLKRNMYPATSM) is disordered. A Nuclear localization signal motif is present at residues 939–955 (KKRAFSGFSSGRATKKP).

This sequence belongs to the helicase family. RecQ subfamily. As to quaternary structure, monomer. Homodimer (via N-terminus). Homotetramer (via N-terminus); dimer of dimers. Homohexamer (via N-terminus). Self-association negatively regulates DNA unwinding amplitude and rate. Oligomer forms dissociate into monomer in presence of ATP. Component of the BTR double Holliday Junction dissolution complex composed of at least him-6, top-3, rmh-1 and rmif-2, which is involved in double strand break repair in the germline. May interact with rmh-1; the interaction is required for mutual stability and localization at nuclear foci. Forms a complex composed of cdc-48.1, him-6 and crp-1; within the complex, interacts with cdc-48.1. Requires Zn(2+) as cofactor.

It localises to the nucleus. It is found in the chromosome. The enzyme catalyses Couples ATP hydrolysis with the unwinding of duplex DNA by translocating in the 3'-5' direction.. The catalysed reaction is ATP + H2O = ADP + phosphate + H(+). In terms of biological role, component of the BTR double Holliday Junction dissolution complex, which is involved in homologous recombination during meiotic double strand break in the germline. Stabilizes and positively regulates the localization of the BTR double Holliday Junction dissolution complex component rmh-1 at nuclear foci during meiotic recombination. Participates in DNA replication and repair. Exhibits a magnesium-dependent ATP-dependent DNA-helicase activity that unwinds single- and double-stranded DNA in a 3'-5' direction. Negatively regulates sister chromatid exchange (SCE). Its function is as follows. ATP-dependent DNA helicase that unwinds single- and double-stranded DNA in a 3'-5' direction. Participates in DNA replication and repair. Negatively regulates sister chromatid exchange (SCE). Stimulates DNA 4-way junction branch migration and DNA Holliday junction dissolution. Binds single-stranded DNA (ssDNA), forked duplex DNA and DNA Holliday junction. The polypeptide is RecQ-like DNA helicase blm-1 (Caenorhabditis elegans).